The sequence spans 382 residues: Prophage ps2 probable integrase (382 aa).

The Core-binding (CB) domain occupies 63–142; it reads AKFTDIAEEW…TLNLIFDYAV (80 aa). The Tyr recombinase domain occupies 170–376; the sequence is IQNKYLEQNE…TENMKSSIID (207 aa). Active-site residues include arginine 209, lysine 242, histidine 326, arginine 329, and histidine 352. Tyrosine 363 (O-(3'-phospho-DNA)-tyrosine intermediate) is an active-site residue.

This sequence belongs to the 'phage' integrase family.

This is Prophage ps2 probable integrase (ps201) from Lactococcus lactis subsp. lactis (strain IL1403) (Streptococcus lactis).